The chain runs to 110 residues: Putative caspase recruitment domain-containing protein 17P (110 aa).

The CARD domain occupies 1-91 (MADKVLKEKR…HLAGTLGLSA (91 aa)).

As to quaternary structure, interacts with pro-CASP1. Ubiquitous.

Its subcellular location is the cytoplasm. Its function is as follows. Regulator of procaspase-1/CASP1 activation implicated in the regulation of the proteolytic maturation of pro-IL-1beta/IL1B and its release during inflammation. Inhibits the release of IL1B in response to LPS in monocytes. However, unlike CASP1, do not induce NF-kappa-B activation. The sequence is that of Putative caspase recruitment domain-containing protein 17P (CARD17P) from Homo sapiens (Human).